An 83-amino-acid polypeptide reads, in one-letter code: Scyreptin (83 aa).

In terms of biological role, cationic antimicrobial peptide that exhibits a potent and broad-spectrum antimicrobial activity against both bacteria and fungi, as well as against the multidrug-resistant bacteria P.aeruginosa. Exhibits rapid bactericidal kinetic. Acts by destroying the integrity of bacterial membranes, leading to bacterial death. Also exhibits potent anti-biofilm activity against P.aeruginosa. Shows high thermal stability and ion tolerance, as it maintains antibacterial activity even when heated to 100 degrees Celsius for 30 minutes and in presence of high levels of NaCl, CaCl(2) and MgCl(2). Does not show cytotoxicity and hemolytic activity. In a mouse model of burn infection, exhibits a remarkably reduction in the bacterial load caused by multidrug-resistant P.aeruginosa at the site of infection, and promotes wound healing. This Scylla paramamosain (Mud crab) protein is Scyreptin.